We begin with the raw amino-acid sequence, 193 residues long: Xanthine phosphoribosyltransferase (193 aa).

Leu20 and Thr27 together coordinate xanthine. 128–132 provides a ligand contact to 5-phospho-alpha-D-ribose 1-diphosphate; sequence ANGQA. Lys156 provides a ligand contact to xanthine.

This sequence belongs to the purine/pyrimidine phosphoribosyltransferase family. Xpt subfamily. Homodimer.

It is found in the cytoplasm. The catalysed reaction is XMP + diphosphate = xanthine + 5-phospho-alpha-D-ribose 1-diphosphate. The protein operates within purine metabolism; XMP biosynthesis via salvage pathway; XMP from xanthine: step 1/1. Its function is as follows. Converts the preformed base xanthine, a product of nucleic acid breakdown, to xanthosine 5'-monophosphate (XMP), so it can be reused for RNA or DNA synthesis. The protein is Xanthine phosphoribosyltransferase of Streptococcus pneumoniae serotype 19F (strain G54).